A 213-amino-acid polypeptide reads, in one-letter code: ATP phosphoribosyltransferase (213 aa).

The protein belongs to the ATP phosphoribosyltransferase family. Short subfamily. In terms of assembly, heteromultimer composed of HisG and HisZ subunits.

The protein resides in the cytoplasm. The catalysed reaction is 1-(5-phospho-beta-D-ribosyl)-ATP + diphosphate = 5-phospho-alpha-D-ribose 1-diphosphate + ATP. The protein operates within amino-acid biosynthesis; L-histidine biosynthesis; L-histidine from 5-phospho-alpha-D-ribose 1-diphosphate: step 1/9. In terms of biological role, catalyzes the condensation of ATP and 5-phosphoribose 1-diphosphate to form N'-(5'-phosphoribosyl)-ATP (PR-ATP). Has a crucial role in the pathway because the rate of histidine biosynthesis seems to be controlled primarily by regulation of HisG enzymatic activity. The chain is ATP phosphoribosyltransferase from Crocosphaera subtropica (strain ATCC 51142 / BH68) (Cyanothece sp. (strain ATCC 51142)).